Consider the following 95-residue polypeptide: Probable FAD-linked sulfhydryl oxidase OPG072 (95 aa).

Residues 1–8 (MNPKHWGR) lie on the Intravirion side of the membrane. One can recognise an ERV/ALR sulfhydryl oxidase domain in the interval 1-95 (MNPKHWGRAV…AIDVSKVKPL (95 aa)). Residues 9–25 (AVWTIIFIVLSQAGLDG) form a helical membrane-spanning segment. Residues 26 to 95 (NIEACKRKLY…AIDVSKVKPL (70 aa)) lie on the Virion surface side of the membrane. Cysteine 43 and cysteine 46 are disulfide-bonded.

The protein belongs to the orthopoxvirus OPG072 family. Interacts with OPG128; this interaction involves formation of a transient disulfide-bonded intermediate, allowing disulfide bond transfer. FAD is required as a cofactor.

It localises to the virion membrane. Its subcellular location is the host cytoplasm. It catalyses the reaction 2 R'C(R)SH + O2 = R'C(R)S-S(R)CR' + H2O2. In terms of biological role, FAD-dependent sulfhydryl oxidase that catalyzes disulfide bond formation. The complete pathway for formation of disulfide bonds in intracellular virion membrane proteins sequentially involves thiol-disulfide transfer between OPG072, OPG128 and OPG088. The chain is Probable FAD-linked sulfhydryl oxidase OPG072 (OPG072) from Monkeypox virus.